We begin with the raw amino-acid sequence, 485 residues long: Cholesterol 16,22-dihydroxylase CYP90G4 (485 aa).

The helical transmembrane segment at 4 to 24 threads the bilayer; it reads VVILFFLFPTLLVLVVAVLGL. Cys-432 provides a ligand contact to heme.

This sequence belongs to the cytochrome P450 family. In terms of tissue distribution, mainly expressed in leaves and, at low levels, in roots and stems.

It is found in the membrane. The catalysed reaction is cholesterol + 2 reduced [NADPH--hemoprotein reductase] + 2 O2 = (16S,22S)-dihydroxycholesterol + 2 oxidized [NADPH--hemoprotein reductase] + 2 H2O + 2 H(+). Its pathway is steroid metabolism; cholesterol metabolism. Its function is as follows. Involved in the biosynthesis of spiroketal steroid and saponin natural products from cholesterol such as diosgenin and analogs (e.g. furostanol and spirostanol), plant defense compounds used as main precursors for the industrial production of steroid hormones. During the 5,6-spiroketalization of cholesterol, catalyzes the hydroxylation of cholesterol to form 16S,22S-dihydroxycholesterol and, possibly, the subsequent conversion of 16S,22S-dihydroxycholesterol into 16-oxo-22-hydroxy-cholesterol and 16-hydroxy-22-oxo-cholesterol. 16-hydroxy-22-oxo-cholesterol submit a spontaneous reaction leading to the production of furostanol-type steroid diastereomers, precursors of diosgenin. The polypeptide is Cholesterol 16,22-dihydroxylase CYP90G4 (Paris polyphylla (Daiswa polyphylla)).